Consider the following 465-residue polypeptide: Mothers against decapentaplegic homolog 5 (465 aa).

N-acetylthreonine is present on T2. An MH1 domain is found at P13 to P137. Residues C65, C110, C122, and H127 each coordinate Zn(2+). Positions N163–T251 are disordered. A compositionally biased stretch (polar residues) spans Q169 to N182. A compositionally biased stretch (pro residues) spans P186 to P197. The span at A198–P214 shows a compositional bias: low complexity. Residues N237–T251 are compositionally biased toward polar residues. The MH2 domain occupies W271–S465. Residues S463 and S465 each carry the phosphoserine modification.

It belongs to the dwarfin/SMAD family. Homodimer. Forms trimers with the co-SMAD SMAD4. Interacts with PEBP2-alpha subunit and SMURF1. Interacts with SUV39H1 and SUV39H2. Interacts (via MH2 domain) with LEMD3. Interacts with WWP1. Interacts with TMEM119. Interacts with ZNF8. Interacts with RANBP3L. Interacts with HK1. Interacts with HGS; this interaction attenuates BMP signaling. In terms of processing, phosphorylated on serine by BMP (bone morphogenetic proteins) type 1 receptor kinase. Ubiquitin-mediated proteolysis by SMAD-specific E3 ubiquitin ligase SMURF1. As to expression, predominantly expressed in mesenchyme and somites during embryogenesis, and present in many tissues of the adult.

It localises to the cytoplasm. It is found in the nucleus. The protein localises to the mitochondrion. In terms of biological role, transcriptional regulator that plays a role in various cellular processes including embryonic development, cell differentiation, angiogenesis and tissue homeostasis. Upon BMP ligand binding to their receptors at the cell surface, is phosphorylated by activated type I BMP receptors (BMPRIs) and associates with SMAD4 to form a heteromeric complex which translocates into the nucleus acting as transcription factor. In turn, the hetero-trimeric complex recognizes cis-regulatory elements containing Smad Binding Elements (SBEs) to modulate the outcome of the signaling network. Non-phosphorylated SMAD5 has a cytoplasmic role in energy metabolism regulation by promoting mitochondrial respiration and glycolysis in response to cytoplasmic pH changes. Mechanistically, interacts with hexokinase 1/HK1 and thereby accelerates glycolysis. This is Mothers against decapentaplegic homolog 5 (Smad5) from Mus musculus (Mouse).